The primary structure comprises 96 residues: uncharacterized protein (96 aa).

Positions E9–R86 form a coiled coil.

The protein belongs to the WXG100 family. sagEsxA-like subfamily.

This is an uncharacterized protein from Clostridium acetobutylicum (strain ATCC 824 / DSM 792 / JCM 1419 / IAM 19013 / LMG 5710 / NBRC 13948 / NRRL B-527 / VKM B-1787 / 2291 / W).